Reading from the N-terminus, the 997-residue chain is Autophagy-related protein 9 (997 aa).

The Cytoplasmic segment spans residues 1 to 318; that stretch reads MERDEYQLPN…DVYNYYLGNG (318 aa). At S19 the chain carries Phosphoserine; by ATG1. Polar residues predominate over residues 29-39; the sequence is VNPSLNSQEMS. The interval 29–88 is disordered; that stretch reads VNPSLNSQEMSNFPLPDIERGSSLLHSTNDSREDVDENDLRVPESDQGTSTEEEDEVDEE. A compositionally biased stretch (acidic residues) spans 79-88; it reads TEEEDEVDEE. Residues K113 and K121 each participate in a glycyl lysine isopeptide (Lys-Gly) (interchain with G-Cter in ubiquitin) cross-link. S122 is subject to Phosphoserine. 2 disordered regions span residues 128-159 and 213-235; these read VEGS…DGFD and IHHD…QKHG. A Glycyl lysine isopeptide (Lys-Gly) (interchain with G-Cter in ubiquitin) cross-link involves residue K138. Phosphoserine occurs at positions 143 and 144. Positions 144 to 159 are enriched in acidic residues; that stretch reads SEEEEDNEFINNDGFD. Polar residues predominate over residues 221-233; that stretch reads ANNGPRNINGNQK. Residues 319–339 form a helical membrane-spanning segment; sequence FYCIILEKILNICTLLFVVFV. At 340-376 the chain is on the lumenal side; it reads STYMGHCVDYSKLPTSHRVSDIIIDKCYSNSITGFTK. Residues 377–397 traverse the membrane as a helical segment; sequence FFLWMFYFFVILKIVQLYFDV. The Cytoplasmic segment spans residues 398-538; sequence QKLSELQNFY…EELQKRFMLA (141 aa). The stretch at 539-559 is an intramembrane region; sequence GFLNIILAPFLVTYFVLLYFF. Over 560 to 620 the chain is Cytoplasmic; that stretch reads RYFNEYKTSP…DQFPKEKTNL (61 aa). A helical membrane pass occupies residues 621–641; the sequence is FLKFVSFICGSFVAILAFLTV. Residues 642-656 lie on the Lumenal side of the membrane; the sequence is FDPENFLNFEITSDR. S657 carries the post-translational modification Phosphoserine; by ATG1. A helical membrane pass occupies residues 657 to 677; sequence SVIFYITILGAIWSVSRNTIT. Topologically, residues 678 to 723 are cytoplasmic; it reads QEYHVFDPEETLKELYEYTHYLPKEWEGRYHKEEIKLEFCKLYNLR. A Glycyl lysine isopeptide (Lys-Gly) (interchain with G-Cter in ubiquitin) cross-link involves residue K701. The stretch at 724–744 is an intramembrane region; that stretch reads IVILLRELTSLMITPFVLWFS. Residues 745-997 lie on the Cytoplasmic side of the membrane; it reads LPSSAGRIVD…EYYKKSDVGR (253 aa). 2 positions are modified to phosphoserine: S787 and S792. Residue T794 is modified to Phosphothreonine. Phosphoserine; by ATG1 is present on S802. Phosphothreonine; by ATG1 is present on T804. 2 positions are modified to phosphoserine; by ATG1: S831 and S842. At S864 the chain carries Phosphoserine. Residues S948 and S969 each carry the phosphoserine; by ATG1 modification.

It belongs to the ATG9 family. Homotrimer; forms a homotrimer with a central pore that forms a path between the two membrane leaflets. Interacts with ATG23 and ATG27 to form a cycling complex for trafficking to the PAS. Interacts (via N-terminus) with ATG11, required for recruitment of ATG9 to the PAS for the Cvt pathway during nutrient-rich conditions. Interacts (via N-terminus) with ATG17; required for recruitment to the PAS during autophagy and starved conditions. Interacts with ATG2 and ATG18; required for the retrieval of ATG9 from the PAS to the cytoplasmic pool. Interacts with ATG41. Interacts with the conserved oligomeric Golgi (COG) complex subunits COG3 and COG4. Interacts with TRS85. In terms of processing, phosphorylated by ATG1; phosphorylation is required for autophagy and cytoplasm to vacuole transport (Cvt) vesicle formation. Phosphorylation by ATG1 regulates ATG18 interaction and preautophagosome elongation. Phosphorylation at Ser-122 is required for selective autophagy by regulating anterograde trafficking and interaction with ATG23 and ATG27. Phosphorylation at Ser-122 prevents ubiquitination by the SCF(MET30) complex. Post-translationally, ubiquitinated by the SCF(MET30) complex in normal conditions, leading to its degradation by the proteasome, thereby preventing inappropriate induction of autophagy. Ubiquitination by the SCF(MET30) complex is prevented by phosphorylation at Ser-122.

Its subcellular location is the preautophagosomal structure membrane. The protein resides in the cytoplasmic vesicle membrane. The protein localises to the golgi apparatus membrane. It is found in the endoplasmic reticulum membrane. It localises to the mitochondrion membrane. The enzyme catalyses a 1,2-diacyl-sn-glycero-3-phosphocholine(in) = a 1,2-diacyl-sn-glycero-3-phosphocholine(out). It catalyses the reaction a 1,2-diacyl-sn-glycero-3-phospho-L-serine(in) = a 1,2-diacyl-sn-glycero-3-phospho-L-serine(out). The catalysed reaction is a 1,2-diacyl-sn-glycero-3-phosphoethanolamine(in) = a 1,2-diacyl-sn-glycero-3-phosphoethanolamine(out). It carries out the reaction a 1,2-diacyl-sn-glycero-3-phospho-(1D-myo-inositol-3-phosphate)(in) = a 1,2-diacyl-sn-glycero-3-phospho-(1D-myo-inositol-3-phosphate)(out). Its function is as follows. Phospholipid scramblase involved in autophagy and cytoplasm to vacuole transport (Cvt) vesicle formation. Cycles between the preautophagosomal structure/phagophore assembly site (PAS) and the cytoplasmic vesicle pool and supplies membrane for the growing autophagosome. Lipid scramblase activity plays a key role in preautophagosomal structure/phagophore assembly by distributing the phospholipids that arrive through ATG2 from the cytoplasmic to the luminal leaflet of the bilayer, thereby driving autophagosomal membrane expansion. Required for mitophagy. Also involved in endoplasmic reticulum-specific autophagic process and is essential for the survival of cells subjected to severe ER stress. Recruits vesicle-tethering proteins TRS85 and YPT1 to the autophagosome formation site. Also recruits ATG23 and ATG8 to the PAS. In Saccharomyces cerevisiae (strain ATCC 204508 / S288c) (Baker's yeast), this protein is Autophagy-related protein 9.